Here is a 594-residue protein sequence, read N- to C-terminus: Suppressor of hairless protein (594 aa).

Residues 20–87 (ETTVVNPNGS…QQQQQHQQQM (68 aa)) are disordered. Positions 58 to 87 (QQQQQQLQVHHQQQQQQQQQQQQQQHQQQM) are enriched in low complexity. DNA-binding regions lie at residues 131-141 (QKSYGNEKRFF), 239-244 (SKPSKK), and 266-271 (RLRSQT). One can recognise an IPT/TIG domain in the interval 429–519 (PIVNSLNLNG…YATGLTFTYT (91 aa)). Composition is skewed to low complexity over residues 542 to 562 (NNNN…AGSP) and 569 to 580 (QQQQQQHQALPS). The interval 542-594 (NNNNNITSISNNNNSNNAGSPAAGGGLQQQQQQHQALPSISEVQWNSHGSGLS) is disordered. The segment covering 582–594 (SEVQWNSHGSGLS) has biased composition (polar residues).

Belongs to the Su(H) family. As to quaternary structure, interacts with activated cleaved Notch. Interacts with Hairless, this interaction preventing its DNA-binding activity. Interacts with insv (via BEN domain).

The protein resides in the nucleus. It localises to the cytoplasm. Transcriptional regulator that plays a central role in Notch signaling, a signaling pathway involved in cell-cell communication that regulates a broad spectrum of cell-fate determinations. Binds directly the 5'-GTGRGAR-3' DNA consensus sequence, which is present in the regulatory region of several genes. Acts as a transcriptional repressor when it is not associated with Notch proteins. When associated with some Notch protein, it acts as a transcriptional activator that activates transcription of Notch target genes. Required for transcription of Sim. Specifically binds to the immunoglobulin kappa-type J segment recombination signal sequence. Required for neurogenesis in imaginal disks. In the larval brain, might play a role as a transducer of Notch signaling during type II neuroblast development. Also functions independently of the Notch pathway, in the development of the bristle sensory organ precursor cell. The protein is Suppressor of hairless protein (Su(H)) of Drosophila melanogaster (Fruit fly).